A 79-amino-acid polypeptide reads, in one-letter code: Hematopoietic cell signal transducer (79 aa).

The N-terminal stretch at 1–17 (MDPPGYLLFLLLLPVAA) is a signal peptide. Over 18-35 (SQTSAGSCSGCGTLSLPL) the chain is Extracellular. The helical transmembrane segment at 36 to 56 (LAGLVAADAVMSLLIVGVVFV) threads the bilayer. The Cytoplasmic portion of the chain corresponds to 57 to 79 (CMRPHGRPAQEDGRVYINMPGRG). At Tyr-72 the chain carries Phosphotyrosine. Residues 72–74 (YIN) form a GRB2 binding site region. Residues 72–75 (YINM) form a PIK3R1 binding site region.

It belongs to the DAP10 family. In terms of assembly, homodimer; Disulfide-linked. Interacts with KLRK1 to form a stable complex, which results in surface expression of both proteins, whereas alone, it is minimally expressed. Interacts with PIK3R1 and GRB2. Interacts with CLEC5A. Forms an CLEC5A/TYROBP/HCST trimolecular complex depending almost solely on TYROBP. Heterohexamer composed of four subunits of HCST/DAP10 and two subunits of KLRK1. Interacts (via transmembrane domain) with KLRK1 isoform 1 (via transmembrane domain); the interaction is required for KLRK1 cell surface expression on naive NK cells and activated CD8(+) T-cells, but is dispensable on activated TYROBP-expressing NK cells. Interacts (via transmembrane domain) with KLRK1 isoform 2 (via transmembrane domain); the interaction is required for KLRK1 NK cell surface expression and induces NK cell-mediated cytotoxicity. Interacts with CD300H. Post-translationally, phosphorylated; PIK3R1 and GRB2 associate specifically with tyrosine-phosphorylated HCST. O-glycosylated.

It localises to the membrane. Functionally, transmembrane adapter protein which associates with KLRK1 to form an activation receptor KLRK1-HCST in lymphoid and myeloid cells; this receptor plays a major role in triggering cytotoxicity against target cells expressing cell surface ligands such as MHC class I chain-related MICA and MICB, and UL16-binding proteins (ULBPs); these ligands are up-regulated by stress conditions and pathological state such as viral infection and tumor transformation. Functions as a docking site for PI3-kinase PIK3R1 and GRB2. Interaction of ULBPs with KLRK1-HCST triggers calcium mobilization and activation of the PIK3R1, MAP2K/ERK, and JAK2/STAT5 signaling pathways. Both PIK3R1 and GRB2 are required for full KLRK1-HCST-mediated activation and ultimate killing of target cells. In NK cells, KLRK1-HCST signaling directly induces cytotoxicity and enhances cytokine production initiated via DAP12/TYROBP-associated receptors. In T-cells, it provides primarily costimulation for TCR-induced signals. KLRK1-HCST receptor plays a role in immune surveillance against tumors and is required for cytolysis of tumors cells; indeed, melanoma cells that do not express KLRK1 ligands escape from immune surveillance mediated by NK cells. In Mus musculus (Mouse), this protein is Hematopoietic cell signal transducer (Hcst).